Reading from the N-terminus, the 161-residue chain is Ribosomal RNA large subunit methyltransferase H (161 aa).

S-adenosyl-L-methionine is bound by residues L78, G110, and L129 to F134.

Belongs to the RNA methyltransferase RlmH family. In terms of assembly, homodimer.

It localises to the cytoplasm. It catalyses the reaction pseudouridine(1915) in 23S rRNA + S-adenosyl-L-methionine = N(3)-methylpseudouridine(1915) in 23S rRNA + S-adenosyl-L-homocysteine + H(+). Specifically methylates the pseudouridine at position 1915 (m3Psi1915) in 23S rRNA. The polypeptide is Ribosomal RNA large subunit methyltransferase H (Symbiobacterium thermophilum (strain DSM 24528 / JCM 14929 / IAM 14863 / T)).